The sequence spans 187 residues: Endoribonuclease YbeY (187 aa).

Zn(2+) is bound by residues H148, H152, and H158.

It belongs to the endoribonuclease YbeY family. Zn(2+) is required as a cofactor.

The protein localises to the cytoplasm. In terms of biological role, single strand-specific metallo-endoribonuclease involved in late-stage 70S ribosome quality control and in maturation of the 3' terminus of the 16S rRNA. The polypeptide is Endoribonuclease YbeY (Ralstonia nicotianae (strain ATCC BAA-1114 / GMI1000) (Ralstonia solanacearum)).